A 258-amino-acid polypeptide reads, in one-letter code: Tryptophan synthase alpha chain (258 aa).

Catalysis depends on proton acceptor residues Glu-47 and Asp-58.

Belongs to the TrpA family. As to quaternary structure, tetramer of two alpha and two beta chains.

The catalysed reaction is (1S,2R)-1-C-(indol-3-yl)glycerol 3-phosphate + L-serine = D-glyceraldehyde 3-phosphate + L-tryptophan + H2O. It participates in amino-acid biosynthesis; L-tryptophan biosynthesis; L-tryptophan from chorismate: step 5/5. Functionally, the alpha subunit is responsible for the aldol cleavage of indoleglycerol phosphate to indole and glyceraldehyde 3-phosphate. The sequence is that of Tryptophan synthase alpha chain from Bacillus cereus (strain G9842).